A 552-amino-acid chain; its full sequence is C-type lectin receptor-like tyrosine-protein kinase At1g52310 (552 aa).

The first 27 residues, 1–27, serve as a signal peptide directing secretion; it reads MELKWVSCRKQSLFLISCLALLCLASL. Over 28–201 the chain is Extracellular; the sequence is DTISCESTQN…DIKCRNCHKY (174 aa). Residues asparagine 37, asparagine 59, asparagine 69, asparagine 106, asparagine 118, asparagine 137, asparagine 154, asparagine 169, and asparagine 180 are each glycosylated (N-linked (GlcNAc...) asparagine). The 130-residue stretch at 59 to 188 folds into the C-type lectin domain; the sequence is NQTKCYAYFK…CNASHAFVCA (130 aa). 2 disulfide bridges follow: cysteine 80–cysteine 187 and cysteine 164–cysteine 179. A helical membrane pass occupies residues 202–222; the sequence is LVILAVVSGLILFTTFAIILW. Residues 223–552 lie on the Cytoplasmic side of the membrane; the sequence is LLVYKRSKKR…QQLVQPLEVK (330 aa). One can recognise a Protein kinase domain in the interval 268 to 546; it reads SEANRLAGDA…HVVHQLQQLV (279 aa). ATP is bound by residues 274–282 and lysine 296; that span reads AGDAKTGGT. Aspartate 394 functions as the Proton acceptor in the catalytic mechanism.

This sequence belongs to the protein kinase superfamily. Tyr protein kinase family.

It localises to the cell membrane. The enzyme catalyses L-tyrosyl-[protein] + ATP = O-phospho-L-tyrosyl-[protein] + ADP + H(+). The protein is C-type lectin receptor-like tyrosine-protein kinase At1g52310 of Arabidopsis thaliana (Mouse-ear cress).